A 64-amino-acid polypeptide reads, in one-letter code: MNIRKNSKSVSKRFKVTSNKLILYKPASKSHLQEKKTVSRKKRLCRVKRIKVVDSKSIKLRYMF.

Belongs to the bacterial ribosomal protein bL35 family.

The protein localises to the plastid. Its subcellular location is the chloroplast. The chain is Large ribosomal subunit protein bL35c from Cyanidium caldarium (Red alga).